We begin with the raw amino-acid sequence, 266 residues long: Luciferase (266 aa).

The helical transmembrane segment at 22-41 threads the bilayer; sequence GLAVTCCAVAVASIIAFPYI.

Belongs to the fungal luciferase family.

It localises to the membrane. The catalysed reaction is 3-hydroxyhispidin + O2 = (E)-caffeoylpyruvate + hnu + CO2. The enzyme catalyses 3-hydroxyhispidin + O2 = 4-[(E)-2-(3,4-dihydroxyphenyl)ethenyl]-1,7-dihydroxy-2,3,5-trioxabicyclo[2.2.2]oct-7-en-6-one. Functionally, luciferase; part of the gene cluster that mediates the fungal bioluminescence cycle. Uses the fungal luciferin 3-hydroxyhispidin as a substrate to produce an endoperoxide as a high-energy intermediate with decomposition that yields oxyluciferin (also known as caffeoylpyruvate) and light emission. The fungal bioluminescence cycle begins with the hispidin synthetase that catalyzes the formation of hispidin which is further hydroxylated by the hispidin-3-hydroxylase, yielding the fungal luciferin 3-hydroxyhispidin. The luciferase then produces an endoperoxide as a high-energy intermediate with decomposition that yields oxyluciferin and light emission. Oxyluciferin can be recycled to caffeic acid by caffeoylpyruvate hydrolase. This chain is Luciferase, found in Armillaria mellea (Honey mushroom).